The sequence spans 66 residues: DNA-directed RNA polymerase subunit Rpo10 (66 aa).

Residues C7, C10, C47, and C48 each contribute to the Zn(2+) site.

This sequence belongs to the archaeal Rpo10/eukaryotic RPB10 RNA polymerase subunit family. In terms of assembly, part of the RNA polymerase complex. Requires Zn(2+) as cofactor.

Its subcellular location is the cytoplasm. The enzyme catalyses RNA(n) + a ribonucleoside 5'-triphosphate = RNA(n+1) + diphosphate. In terms of biological role, DNA-dependent RNA polymerase (RNAP) catalyzes the transcription of DNA into RNA using the four ribonucleoside triphosphates as substrates. This Haloarcula marismortui (strain ATCC 43049 / DSM 3752 / JCM 8966 / VKM B-1809) (Halobacterium marismortui) protein is DNA-directed RNA polymerase subunit Rpo10.